We begin with the raw amino-acid sequence, 467 residues long: ATP-dependent protease ATPase subunit HslU (467 aa).

ATP contacts are provided by residues Val-22 and 64–69; that span reads GVGKTE. A disordered region spans residues 149–192; sequence QTNNPLESLFGGAIPNFGQNNEDEEEPPTEEIKTKRSEIKRQLE. The span at 178–192 shows a compositional bias: basic and acidic residues; the sequence is EEIKTKRSEIKRQLE. Residues Asp-280, Glu-345, and Arg-417 each contribute to the ATP site.

The protein belongs to the ClpX chaperone family. HslU subfamily. A double ring-shaped homohexamer of HslV is capped on each side by a ring-shaped HslU homohexamer. The assembly of the HslU/HslV complex is dependent on binding of ATP.

The protein localises to the cytoplasm. In terms of biological role, ATPase subunit of a proteasome-like degradation complex; this subunit has chaperone activity. The binding of ATP and its subsequent hydrolysis by HslU are essential for unfolding of protein substrates subsequently hydrolyzed by HslV. HslU recognizes the N-terminal part of its protein substrates and unfolds these before they are guided to HslV for hydrolysis. The protein is ATP-dependent protease ATPase subunit HslU of Staphylococcus aureus (strain MRSA252).